A 297-amino-acid polypeptide reads, in one-letter code: Transmembrane protein 178A (297 aa).

The N-terminal stretch at 1–25 (MEPRALVTALSLGLSLCSLGLLVTA) is a signal peptide. Over 26-179 (IFTDHWYETD…LLHLRRITAG (154 aa)) the chain is Extracellular. Positions 41–57 (ESCERSRAGADPPDQKN) are enriched in basic and acidic residues. The disordered stretch occupies residues 41 to 86 (ESCERSRAGADPPDQKNRLMPLSHLPLRDSPPLGRRLLPGGPGRSD). The segment covering 68-79 (RDSPPLGRRLLP) has biased composition (low complexity). N-linked (GlcNAc...) asparagine glycosylation occurs at Asn-158. Residues 180 to 200 (FLGMAVAVLLCGCIVATVSFF) traverse the membrane as a helical segment. Over 201–208 (WEESLTQH) the chain is Cytoplasmic. Residues 209–229 (VAGLLFLMTGIFCTISLCTYA) form a helical membrane-spanning segment. Residues 230 to 257 (ASVSYDLNRVPKLIYSLPHDVEHGYSWS) are Extracellular-facing. A helical transmembrane segment spans residues 258-278 (IFCAWCSLGFIVAAGGLCIAY). Over 279–297 (PFISRTKIAHLKSGRDSTV) the chain is Cytoplasmic.

This sequence belongs to the TMEM178 family. Interacts with STIM1.

It localises to the endoplasmic reticulum membrane. In terms of biological role, acts as a negative regulator of osteoclast differentiation in basal and inflammatory conditions by regulating TNFSF11-induced Ca (2+) fluxes, thereby controlling the induction of NFATC1. This is Transmembrane protein 178A (Tmem178a) from Rattus norvegicus (Rat).